The chain runs to 267 residues: Imidazole glycerol phosphate synthase subunit HisF (267 aa).

Active-site residues include Asp21 and Asp140.

Belongs to the HisA/HisF family. In terms of assembly, heterodimer of HisH and HisF.

It is found in the cytoplasm. The catalysed reaction is 5-[(5-phospho-1-deoxy-D-ribulos-1-ylimino)methylamino]-1-(5-phospho-beta-D-ribosyl)imidazole-4-carboxamide + L-glutamine = D-erythro-1-(imidazol-4-yl)glycerol 3-phosphate + 5-amino-1-(5-phospho-beta-D-ribosyl)imidazole-4-carboxamide + L-glutamate + H(+). The protein operates within amino-acid biosynthesis; L-histidine biosynthesis; L-histidine from 5-phospho-alpha-D-ribose 1-diphosphate: step 5/9. In terms of biological role, IGPS catalyzes the conversion of PRFAR and glutamine to IGP, AICAR and glutamate. The HisF subunit catalyzes the cyclization activity that produces IGP and AICAR from PRFAR using the ammonia provided by the HisH subunit. The protein is Imidazole glycerol phosphate synthase subunit HisF of Bordetella avium (strain 197N).